The sequence spans 474 residues: Bifunctional ribulose 5-phosphate reductase/CDP-ribitol pyrophosphorylase Bcs1 (474 aa).

Residues M1–F238 form a ribitol-5-phosphate cytidylyltransferase region. The tract at residues Y250 to K474 is ribulose-5-phosphate reductase.

It in the N-terminal section; belongs to the IspD/TarI cytidylyltransferase family. In the C-terminal section; belongs to the short-chain dehydrogenases/reductases (SDR) family. Monomer.

The catalysed reaction is D-ribitol 5-phosphate + CTP + H(+) = CDP-L-ribitol + diphosphate. It catalyses the reaction D-ribitol 5-phosphate + NADP(+) = D-ribulose 5-phosphate + NADPH + H(+). It participates in capsule biogenesis; capsule polysaccharide biosynthesis. In terms of biological role, catalyzes the NADPH-dependent reduction of D-ribulose 5-phosphate to D-ribitol 5-phosphate and the further reaction of D-ribitol 5-phosphate with CTP to form CDP-ribitol. The chain is Bifunctional ribulose 5-phosphate reductase/CDP-ribitol pyrophosphorylase Bcs1 from Haemophilus influenzae.